The primary structure comprises 488 residues: WD repeat-containing protein slp1 (488 aa).

Disordered stretches follow at residues 1–29 (MEIAGNSSTISPTFSTPTKKRNLVFPNSP) and 74–93 (CGSPRNKSRPASRSDRFIPS). Residues 7–17 (SSTISPTFSTP) are compositionally biased toward low complexity. WD repeat units lie at residues 178–215 (IDDYYLNLLDWSNLNVVAVALERNVYVWNADSGSVSAL), 219–258 (DESTYVASVKWSHDGSFLSVGLGNGLVDIYDVESQTKLRT), 261–298 (GHQARVGCLSWNRHVLSSGSRSGAIHHHDVRIANHQIG), 302–341 (GHSSEVCGLAWRSDGLQLASGGNDNVVQIWDARSSIPKFT), 344–386 (NHNA…RVNT), 388–429 (DAGS…LTKQ), and 434–473 (AHDTRVLYSALSPDGRILSTAASDENLKFWRVYDGDHVKR).

This sequence belongs to the WD repeat CDC20/Fizzy family. Interacts with cdc13, mad3 and mes1.

Its function is as follows. Required for mad2-dependent spindle checkpoint activation. Promotes ubiquitin-dependent degradation of cdc13 by the anaphase promoting complex/cyclosome (APC/C). This is WD repeat-containing protein slp1 (slp1) from Schizosaccharomyces pombe (strain 972 / ATCC 24843) (Fission yeast).